Reading from the N-terminus, the 33-residue chain is Vejocalcin (33 aa).

3 disulfides stabilise this stretch: Cys3/Cys17, Cys10/Cys21, and Cys16/Cys32. Residues 23-24 (RR) are essential for stimulation of [3H]ryanodine binding to RYR1.

Expressed by the venom gland.

It is found in the secreted. Functionally, this toxin stabilizes ryanodine receptor 1 (RyR1) opening in a long-lasting subconductance state (60% of the full conductance state). Furthermore, it triggers calcium release from sarcoplasmic vesicles (31 nM are enough to induce a sharp release, and 65% of the total calcium is released after toxin (100 nM) addition) probably by acting as a cell-penetrating peptide (CPP). In addition, it has been shown to dose-dependently stimulate ryanodine binding to RyR1 (EC(50)=3.7 nM). It also augments the bell-shaped calcium-[3H]ryanodine binding curve that is maximal at about 10 uM calcium concentration. It binds a different site as ryanodine. It acts synergistically with caffeine. In vivo, intracerebroventricular injection into mice induces neurotoxic symptoms, followed by death. In Vaejovis mexicanus (Mexican scorpion), this protein is Vejocalcin.